The following is a 276-amino-acid chain: Formamidopyrimidine-DNA glycosylase (276 aa).

The Schiff-base intermediate with DNA role is filled by Pro-2. Catalysis depends on Glu-3, which acts as the Proton donor. Residue Lys-58 is the Proton donor; for beta-elimination activity of the active site. Positions 94, 112, and 157 each coordinate DNA. An FPG-type zinc finger spans residues 242-276 (FVYDRAGLPCRVCGTPIKQIVQGQRSTYFCPTCQR). The active-site Proton donor; for delta-elimination activity is Arg-266.

This sequence belongs to the FPG family. In terms of assembly, monomer. Zn(2+) serves as cofactor.

It carries out the reaction Hydrolysis of DNA containing ring-opened 7-methylguanine residues, releasing 2,6-diamino-4-hydroxy-5-(N-methyl)formamidopyrimidine.. The enzyme catalyses 2'-deoxyribonucleotide-(2'-deoxyribose 5'-phosphate)-2'-deoxyribonucleotide-DNA = a 3'-end 2'-deoxyribonucleotide-(2,3-dehydro-2,3-deoxyribose 5'-phosphate)-DNA + a 5'-end 5'-phospho-2'-deoxyribonucleoside-DNA + H(+). Its function is as follows. Involved in base excision repair of DNA damaged by oxidation or by mutagenic agents. Acts as a DNA glycosylase that recognizes and removes damaged bases. Has a preference for oxidized purines, such as 7,8-dihydro-8-oxoguanine (8-oxoG). Has AP (apurinic/apyrimidinic) lyase activity and introduces nicks in the DNA strand. Cleaves the DNA backbone by beta-delta elimination to generate a single-strand break at the site of the removed base with both 3'- and 5'-phosphates. The chain is Formamidopyrimidine-DNA glycosylase from Paraburkholderia xenovorans (strain LB400).